We begin with the raw amino-acid sequence, 392 residues long: ATP phosphoribosyltransferase regulatory subunit (392 aa).

This sequence belongs to the class-II aminoacyl-tRNA synthetase family. HisZ subfamily. In terms of assembly, heteromultimer composed of HisG and HisZ subunits.

It is found in the cytoplasm. The protein operates within amino-acid biosynthesis; L-histidine biosynthesis; L-histidine from 5-phospho-alpha-D-ribose 1-diphosphate: step 1/9. Functionally, required for the first step of histidine biosynthesis. May allow the feedback regulation of ATP phosphoribosyltransferase activity by histidine. This chain is ATP phosphoribosyltransferase regulatory subunit, found in Synechococcus sp. (strain CC9902).